The following is a 781-amino-acid chain: Mitogen-activated protein kinase 7 (781 aa).

The segment at M1–G27 is disordered. A2 is modified (N-acetylalanine). The interval A2–T77 is required for cytoplasmic targeting. The region spanning Y55–L347 is the Protein kinase domain. ATP-binding positions include I61–V69 and K84. Positions G78–L139 are required for binding to MAP2K5. The necessary for oligomerization stretch occupies residues M140–Q406. Catalysis depends on D182, which acts as the Proton acceptor. A TXY motif is present at residues T219 to Y221. Positions Q402–V708 are disordered. The tract at residues P407–P781 is may not be required for kinase activity; required to stimulate MEF2C activity. 2 stretches are compositionally biased toward pro residues: residues S433–A445 and Q454–A463. Low complexity predominate over residues K476–S486. Basic and acidic residues-rich tracts occupy residues P502–E519, R527–G544, and D563–T573. A Nuclear localization signal motif is present at residues R505–E539. Composition is skewed to pro residues over residues P578 to G594 and G601 to A614. Low complexity-rich tracts occupy residues A615–Q632 and G642–F652. Residues P653–A664 are compositionally biased toward pro residues. Residues S668–S685 are compositionally biased toward polar residues. S685 carries the phosphoserine modification. Position 698 is a phosphothreonine (T698).

This sequence belongs to the protein kinase superfamily. CMGC Ser/Thr protein kinase family. MAP kinase subfamily. As to quaternary structure, interacts with MAP2K5. Forms oligomers. Interacts with MEF2A, MEF2C and MEF2D; the interaction phosphorylates the MEF2s and enhances transcriptional activity of MEF2A, MEF2C but not MEF2D. Interacts with SGK1. Interacts with PML. Interacts (via N-terminal half) with HSP90AB1-CDC37 chaperone complex in resting cells; the interaction is MAP2K5-independent and prevents MAPK7 from ubiquitination and proteasomal degradation. Interacts with STUB1/CHIP; the interaction is enhanced in the presence of IGF1 or MAP2K5 and promotes STUB1/CHIP E3 ligase activity. Mg(2+) serves as cofactor. Dually phosphorylated on Thr-219 and Tyr-221, which activates the enzyme.

It is found in the cytoplasm. Its subcellular location is the nucleus. The protein resides in the PML body. It catalyses the reaction L-seryl-[protein] + ATP = O-phospho-L-seryl-[protein] + ADP + H(+). It carries out the reaction L-threonyl-[protein] + ATP = O-phospho-L-threonyl-[protein] + ADP + H(+). With respect to regulation, activated by tyrosine and threonine phosphorylation. Activated in response to hyperosmolarity, hydrogen peroxide, and epidermal growth factor (EGF). Plays a role in various cellular processes such as proliferation, differentiation and cell survival. The upstream activator of MAPK7 is the MAPK kinase MAP2K5. Upon activation, it translocates to the nucleus and phosphorylates various downstream targets including MEF2C. EGF activates MAPK7 through a Ras-independent and MAP2K5-dependent pathway. As part of the MAPK/ERK signaling pathway, acts as a negative regulator of apoptosis in cardiomyocytes via interaction with STUB1/CHIP and promotion of STUB1-mediated ubiquitination and degradation of ICER-type isoforms of CREM. May have a role in muscle cell differentiation. May be important for endothelial function and maintenance of blood vessel integrity. MAP2K5 and MAPK7 interact specifically with one another and not with MEK1/ERK1 or MEK2/ERK2 pathways. Phosphorylates SGK1 at Ser-78 and this is required for growth factor-induced cell cycle progression. Involved in the regulation of p53/TP53 by disrupting the PML-MDM2 interaction. This is Mitogen-activated protein kinase 7 (MAPK7) from Bos taurus (Bovine).